The following is a 564-amino-acid chain: Heat shock factor protein 2 (564 aa).

Residues 21–126 mediate DNA binding; that stretch reads VPAFLSKLWA…LLEHIKRKVS (106 aa). Residues 133–206 are hydrophobic repeat HR-A/B; the sequence is NKISQEDLSK…VTLVQNNQLV (74 aa). The span at 271-280 shows a compositional bias: acidic residues; sequence EENTMVDEEN. Disordered regions lie at residues 271 to 301 and 320 to 347; these read EENT…CSRS and QGDK…SPLM. The segment at 390 to 415 is hydrophobic repeat HR-C; it reads LLDYLDSIDCSLEDFQAMLSGRQFSI. A compositionally biased stretch (polar residues) spans 448-465; sequence TTKSNAGPAASQETQVSK. The disordered stretch occupies residues 448–468; sequence TTKSNAGPAASQETQVSKPKS.

The protein belongs to the HSF family. In terms of assembly, homotrimer. As to expression, expressed in most tissues with the exceptions of blood and liver.

The protein localises to the cytoplasm. It is found in the nucleus. Functionally, DNA-binding protein that specifically binds heat shock promoter elements (HSE) and activates transcription. HSF2 shows constitutive DNA binding activity, even without heat shock. This Gallus gallus (Chicken) protein is Heat shock factor protein 2 (HSF2).